Consider the following 382-residue polypeptide: Mannitol-1-phosphate 5-dehydrogenase (382 aa).

Residue 4-15 (AVHFGAGNIGRG) participates in NAD(+) binding.

The protein belongs to the mannitol dehydrogenase family.

The enzyme catalyses D-mannitol 1-phosphate + NAD(+) = beta-D-fructose 6-phosphate + NADH + H(+). This Vibrio parahaemolyticus serotype O3:K6 (strain RIMD 2210633) protein is Mannitol-1-phosphate 5-dehydrogenase.